The following is a 141-amino-acid chain: Thioredoxin-like protein SkfH (141 aa).

Positions K2–L141 constitute a Thioredoxin domain. A disulfide bridge connects residues C41 and C44.

Required for production of the bacteriocin SkfA. The protein is Thioredoxin-like protein SkfH of Bacillus subtilis (strain 168).